A 497-amino-acid chain; its full sequence is uncharacterized protein (497 aa).

The segment covering 1-16 (MSTTTETVTWSQYKPQ) has biased composition (polar residues). Residues 1–29 (MSTTTETVTWSQYKPQETQRRLSRSSTIT) form a disordered region. Ser-64 carries the post-translational modification Phosphoserine. A run of 6 helical transmembrane segments spans residues 86–106 (IALV…ALPI), 120–140 (FSGL…YPML), 155–175 (FRPL…YSLA), 180–200 (WLYL…MFLY), 222–242 (LNIL…GILA), and 258–278 (AGSW…SIFF). Ser-295 bears the Phosphoserine mark. 6 helical membrane-spanning segments follow: residues 309–329 (FMLC…AGYQ), 348–368 (GNFL…STFL), 377–397 (IMLY…VLDA), 407–427 (FVLY…LVSL), 443–463 (VVQV…GAIF), and 468–488 (VGFI…LLYL).

Its subcellular location is the membrane. This is an uncharacterized protein from Schizosaccharomyces pombe (strain 972 / ATCC 24843) (Fission yeast).